A 467-amino-acid polypeptide reads, in one-letter code: Probable Xaa-Pro aminopeptidase pepP (467 aa).

Positions 264, 275, 398, and 438 each coordinate Mn(2+).

This sequence belongs to the peptidase M24B family. Mn(2+) serves as cofactor.

It carries out the reaction Release of any N-terminal amino acid, including proline, that is linked to proline, even from a dipeptide or tripeptide.. In terms of biological role, catalyzes the removal of a penultimate prolyl residue from the N-termini of peptides. This is Probable Xaa-Pro aminopeptidase pepP (pepP) from Neosartorya fischeri (strain ATCC 1020 / DSM 3700 / CBS 544.65 / FGSC A1164 / JCM 1740 / NRRL 181 / WB 181) (Aspergillus fischerianus).